Here is a 94-residue protein sequence, read N- to C-terminus: UPF0768 protein YBL029C-A (94 aa).

The protein belongs to the UPF0768 family.

It is found in the cell membrane. This chain is UPF0768 protein YBL029C-A, found in Saccharomyces cerevisiae (strain ATCC 204508 / S288c) (Baker's yeast).